The sequence spans 195 residues: dCTP deaminase, dUMP-forming (195 aa).

DCTP is bound by residues 105 to 110 (RSSLGR), Asp-123, 131 to 133 (TLE), Gln-152, Tyr-166, Lys-173, and Gln-177. Residue Glu-133 is the Proton donor/acceptor of the active site. Residues 161–195 (PADRPYGDERGSKYQDQDGPQASRIRGDREFGGTQ) are disordered. Residues 165–176 (PYGDERGSKYQD) are compositionally biased toward basic and acidic residues. The segment covering 185–195 (IRGDREFGGTQ) has biased composition (basic and acidic residues).

The protein belongs to the dCTP deaminase family. Homotrimer.

It catalyses the reaction dCTP + 2 H2O = dUMP + NH4(+) + diphosphate. It participates in pyrimidine metabolism; dUMP biosynthesis; dUMP from dCTP: step 1/1. In terms of biological role, bifunctional enzyme that catalyzes both the deamination of dCTP to dUTP and the hydrolysis of dUTP to dUMP without releasing the toxic dUTP intermediate. The polypeptide is dCTP deaminase, dUMP-forming (Halobacterium salinarum (strain ATCC 700922 / JCM 11081 / NRC-1) (Halobacterium halobium)).